Reading from the N-terminus, the 318-residue chain is Extracellular metalloprotease AO090012001025 (318 aa).

The N-terminal stretch at 1 to 23 is a signal peptide; it reads MSHFPTLHILILVIANLQIQCFA. Residues Asn-106, Asn-121, and Asn-193 are each glycosylated (N-linked (GlcNAc...) asparagine). His-229 provides a ligand contact to Zn(2+). Glu-230 is a catalytic residue. His-233 provides a ligand contact to Zn(2+). The cysteines at positions 268 and 295 are disulfide-linked.

Belongs to the peptidase M43B family.

It is found in the secreted. In terms of biological role, secreted metalloproteinase that allows assimilation of proteinaceous substrates. This is Extracellular metalloprotease AO090012001025 from Aspergillus oryzae (strain ATCC 42149 / RIB 40) (Yellow koji mold).